A 358-amino-acid polypeptide reads, in one-letter code: MFDFSIVTNWIHEMLLSVMPEGWAIFIECIAVGVCIVALYAILAIVLIYMERKVCGFFQCRLGPNRVGKWGSIQVICDVLKMLTKEIFTPKDADRFLYNLAPFMVIIASFLTFACIPFNKGAEILNFNVGVFFLLAASSIGVVGILLAGWGSNNKFSLIGAMRSGAQIISYELSVGMSIMTMVVLMGTMQFSEIVEGQADGWFIFKGHIPAVIAFIIYLIAGNAECNRGPFDLPEAESELTAGYHTEYSGMHFGFFYLAEYLNLFIVASVAATIFLGGWMPLHIIGLDGFNAVMDYIPGFIWFFAKAFFVVFLLMWIKWTFPRLRIDQILNLEWKYLVPISMVNLLLMACCVAFGFHF.

The next 8 helical transmembrane spans lie at Ile30–Met50, Phe96–Ile116, Val129–Gly149, Ile168–Thr188, Gly201–Ala221, Phe265–Ile285, Ile297–Ile317, and Tyr336–Phe356.

Belongs to the complex I subunit 1 family. In terms of assembly, NDH-1 is composed of 14 different subunits. Subunits NuoA, H, J, K, L, M, N constitute the membrane sector of the complex.

It localises to the cell inner membrane. It catalyses the reaction a quinone + NADH + 5 H(+)(in) = a quinol + NAD(+) + 4 H(+)(out). Its function is as follows. NDH-1 shuttles electrons from NADH, via FMN and iron-sulfur (Fe-S) centers, to quinones in the respiratory chain. The immediate electron acceptor for the enzyme in this species is believed to be ubiquinone. Couples the redox reaction to proton translocation (for every two electrons transferred, four hydrogen ions are translocated across the cytoplasmic membrane), and thus conserves the redox energy in a proton gradient. This subunit may bind ubiquinone. The polypeptide is NADH-quinone oxidoreductase subunit H (Bacteroides thetaiotaomicron (strain ATCC 29148 / DSM 2079 / JCM 5827 / CCUG 10774 / NCTC 10582 / VPI-5482 / E50)).